The sequence spans 680 residues: WD repeat-containing protein 48 homolog (680 aa).

8 WD repeats span residues 26 to 65, 71 to 110, 113 to 152, 164 to 203, 206 to 245, 248 to 287, 290 to 329, and 350 to 389; these read QHRN…SEKY, HHND…CMST, THRD…ALTA, GSKD…RSMK, GHTE…CVQT, VHKE…NKTL, EEKA…RGTL, and KGGA…KKDT. Residues 594–618 are disordered; sequence TPSGANANNSLQNSQSDGNSEGSQL. Residues 596-609 are compositionally biased toward low complexity; that stretch reads SGANANNSLQNSQS.

Belongs to the WD repeat WDR48 family. Catalytic component of the Usp12-46 deubiquitylase complex consisting of Usp12-46, Wdr20 and Uaf1; regulatory subunit that, together wtih Wdr20, stabilizes Usp12-46. The Usp12-46 deubiquitylase complex associates with arr/arrow; the interaction leads to deubiquitination and stabilization of arr/arrow.

Functionally, regulatory component of the Usp12-46 deubiquitylase complex. activates deubiquitination by increasing the catalytic turnover without increasing the affinity of deubiquitinating enzymes for the substrate. The complex deubiquitylates the wg/wingless-signaling receptor arr/arrow, which stabilizes the receptor and increases its concentration at the cell surface; this enhances the sensitivity of cells to wg/wingless-signal stimulation. This increases the amplitude and spatial range of the signaling response to the wg/wingless morphogen gradient, facilitating the precise concentration-dependent regulation of its target genes. Together with Wdr20 and Usp12-46 required for wg/wingless-mediated signaling in the wing imaginal disc and for wg/wingless-dependent regulation of intestinal stem cell proliferation. The sequence is that of WD repeat-containing protein 48 homolog from Drosophila persimilis (Fruit fly).